A 911-amino-acid chain; its full sequence is Epithelial discoidin domain-containing receptor 1 (911 aa).

Positions 1-19 (MGTGTLSSLLLLLLLVTIG) are cleaved as a signal peptide. Residues 22 to 415 (DMKGHFDPAK…VAKAEGSPTA (394 aa)) are Extracellular-facing. An F5/8 type C domain is found at 32–186 (CRYALGMQDR…VCLRVELYGC (155 aa)). 2 disulfide bridges follow: cysteine 32–cysteine 186 and cysteine 75–cysteine 178. The segment at 193–369 (LSYTAPVGQT…LFSEISFISD (177 aa)) is DS-like domain. Ca(2+) is bound by residues asparagine 213, glutamine 232, aspartate 235, valine 237, tyrosine 255, and tyrosine 257. Asparagine 213 carries an N-linked (GlcNAc...) asparagine glycan. The N-linked (GlcNAc...) asparagine glycan is linked to asparagine 262. Cysteine 305 and cysteine 350 are oxidised to a cystine. Residues serine 362 and glutamate 363 each coordinate Ca(2+). N-linked (GlcNAc...) asparagine glycans are attached at residues asparagine 372 and asparagine 392. Residues 416–436 (ILIGCLVAIILLLLLIIALML) form a helical membrane-spanning segment. Residues 437 to 911 (WRLHWRRLLS…FLADDALNTV (475 aa)) are Cytoplasmic-facing. The tract at residues 468 to 496 (ILINNRPGPREPPPYQEPRPRGTPPHSAP) is disordered. Residues 477–494 (REPPPYQEPRPRGTPPHS) show a composition bias toward pro residues. Positions 479 to 482 (PPPY) match the PPxY motif motif. Phosphotyrosine; by autocatalysis occurs at positions 482, 511, and 518. Residues 608 to 903 (LRFKEKLGEG…PPFAQLHRFL (296 aa)) form the Protein kinase domain. ATP contacts are provided by residues 614 to 622 (LGEGQFGEV) and lysine 653. Phosphotyrosine; by autocatalysis is present on tyrosine 738. Aspartate 764 functions as the Proton acceptor in the catalytic mechanism. 3 positions are modified to phosphotyrosine; by autocatalysis: tyrosine 790, tyrosine 794, and tyrosine 795.

It belongs to the protein kinase superfamily. Tyr protein kinase family. Insulin receptor subfamily. Homodimer. Interacts (via PPxY motif) with WWC1 (via WW domains) in a collagen-regulated manner. Forms a tripartite complex with WWC1 and PRKCZ, but predominantly in the absence of collagen. Interacts (tyrosine phosphorylated) with SHC1. Interacts with SRC. Interacts with MYH9. Interacts with CDH1. Interacts with PTPN11. Interacts with NCK2. Autophosphorylated in response to fibrillar collagen binding. In terms of tissue distribution, detected in the cochlea and the organ of Corti in the inner ear. Isoform 1 is predominant and is expressed in developing embryo and adult brain. Isoform 2 is expressed in various epithelial cells.

The protein resides in the cell membrane. The catalysed reaction is L-tyrosyl-[protein] + ATP = O-phospho-L-tyrosyl-[protein] + ADP + H(+). Tyrosine kinase that functions as a cell surface receptor for fibrillar collagen and regulates cell attachment to the extracellular matrix, remodeling of the extracellular matrix, cell migration, differentiation, survival and cell proliferation. Collagen binding triggers a signaling pathway that involves SRC and leads to the activation of MAP kinases. Regulates remodeling of the extracellular matrix by up-regulation of the matrix metalloproteinases MMP2, MMP7 and MMP9, and thereby facilitates cell migration and wound healing, but also tumor cell invasion. Promotes smooth muscle cell migration, and thereby contributes to arterial wound healing. Phosphorylates PTPN11. Required for normal blastocyst implantation during pregnancy, for normal mammary gland differentiation and normal lactation. Required for normal ear morphology and normal hearing. This chain is Epithelial discoidin domain-containing receptor 1 (Ddr1), found in Mus musculus (Mouse).